The primary structure comprises 992 residues: UPF0182 protein MT3285 (992 aa).

A run of 7 helical transmembrane segments spans residues 17 to 39 (RILIMIALGVIVLLLAGPRLIDA), 59 to 81 (LATRIVVCLVAGVVVGGIVFGGL), 113 to 135 (LVGIGIPAAIGLLAGIVAQSYWA), 169 to 191 (LMLSYMLVSVFLAFVANLVAHYI), 212 to 229 (LVSLVGVLVLLKAVAYWL), 255 to 277 (VLPAKLILMAIALICAAAVFSAI), and 284 to 306 (IPAIGLVLLLLSSLIVGAGWPLI). The segment at 906 to 938 (PTEAAVPPSPAANPPPPASGPQPPPVTAAPPVP) is disordered. The segment covering 912 to 938 (PPSPAANPPPPASGPQPPPVTAAPPVP) has biased composition (pro residues).

Belongs to the UPF0182 family.

The protein resides in the cell membrane. This chain is UPF0182 protein MT3285, found in Mycobacterium tuberculosis (strain CDC 1551 / Oshkosh).